Reading from the N-terminus, the 346-residue chain is Serpentine receptor class gamma-20 (346 aa).

7 consecutive transmembrane segments (helical) span residues 27–47 (VMLSILEYLVQATYLSVSAVL), 69–89 (FFVLYAAEAVMNVYSCVIEVL), 106–128 (PFFFTPSILTKLYFLLNHYCLAF), 157–177 (ILAPVLVSLFVLPLGVTWNIL), 212–232 (IPCLFLMIVFFLASIFGLTML), 254–274 (TMLFAIAQIYFAFLAGYLPGI), and 279–299 (LLISFNVFDVLYVYSPIALIL).

It belongs to the nematode receptor-like protein srg family.

It localises to the membrane. The sequence is that of Serpentine receptor class gamma-20 (srg-20) from Caenorhabditis elegans.